The primary structure comprises 313 residues: Malate dehydrogenase (313 aa).

Residues 8-13 and D33 each bind NAD(+); that span reads GAGNVG. The substrate site is built by R83 and R89. NAD(+) contacts are provided by residues N96 and 119–121; that span reads ISN. N121 and R152 together coordinate substrate. H176 functions as the Proton acceptor in the catalytic mechanism.

Belongs to the LDH/MDH superfamily. MDH type 3 family.

The enzyme catalyses (S)-malate + NAD(+) = oxaloacetate + NADH + H(+). Functionally, catalyzes the reversible oxidation of malate to oxaloacetate. In Bacteroides fragilis (strain ATCC 25285 / DSM 2151 / CCUG 4856 / JCM 11019 / LMG 10263 / NCTC 9343 / Onslow / VPI 2553 / EN-2), this protein is Malate dehydrogenase.